Here is a 328-residue protein sequence, read N- to C-terminus: Tetraacyldisaccharide 4'-kinase (328 aa).

58–65 (TMGGAGKT) contributes to the ATP binding site.

Belongs to the LpxK family.

The catalysed reaction is a lipid A disaccharide + ATP = a lipid IVA + ADP + H(+). It participates in glycolipid biosynthesis; lipid IV(A) biosynthesis; lipid IV(A) from (3R)-3-hydroxytetradecanoyl-[acyl-carrier-protein] and UDP-N-acetyl-alpha-D-glucosamine: step 6/6. Its function is as follows. Transfers the gamma-phosphate of ATP to the 4'-position of a tetraacyldisaccharide 1-phosphate intermediate (termed DS-1-P) to form tetraacyldisaccharide 1,4'-bis-phosphate (lipid IVA). This Phenylobacterium zucineum (strain HLK1) protein is Tetraacyldisaccharide 4'-kinase.